Reading from the N-terminus, the 68-residue chain is Protein P33 (68 aa).

A coiled-coil region spans residues 34–63 (IVNLQGRIAELEARETEMLARVDTLIARLA).

Its function is as follows. Assembly protein. The sequence is that of Protein P33 (XXXIII) from Acinetobacter calcoaceticus (Arthrobacter siderocapsulatus).